A 100-amino-acid polypeptide reads, in one-letter code: Small ribosomal subunit protein bS20 (100 aa).

The span at 1–22 (MASGKPKKKNPRLASGRKRARQ) shows a compositional bias: basic residues. A disordered region spans residues 1 to 26 (MASGKPKKKNPRLASGRKRARQGLKL).

It belongs to the bacterial ribosomal protein bS20 family.

In terms of biological role, binds directly to 16S ribosomal RNA. This Acidovorax ebreus (strain TPSY) (Diaphorobacter sp. (strain TPSY)) protein is Small ribosomal subunit protein bS20.